Consider the following 264-residue polypeptide: uncharacterized protein (264 aa).

Positions 1-21 are cleaved as a signal peptide; it reads MMWNYFVTCIVLYANIISIHT. Residues 182-247 form a disordered region; the sequence is QQPNAAQVPT…AANNGLDLTS (66 aa). Residues 190–213 show a composition bias toward low complexity; sequence PTTSQQQPTSNTGGQQPPTNASNP. The N-linked (GlcNAc...) asparagine glycan is linked to Asn-209. Residues 214–226 are compositionally biased toward pro residues; the sequence is PTNPQPTPTPAQP. The span at 230–247 shows a compositional bias: polar residues; that stretch reads GTQVQQTPAANNGLDLTS.

As to expression, component of the acid-insoluble and acid-soluble organic matrix of calcified layers of the shell (at protein level).

The protein localises to the secreted. This is an uncharacterized protein from Lottia gigantea (Giant owl limpet).